We begin with the raw amino-acid sequence, 368 residues long: Peptide chain release factor 2 (368 aa).

Glutamine 249 is subject to N5-methylglutamine.

Belongs to the prokaryotic/mitochondrial release factor family. Post-translationally, methylated by PrmC. Methylation increases the termination efficiency of RF2.

It is found in the cytoplasm. Peptide chain release factor 2 directs the termination of translation in response to the peptide chain termination codons UGA and UAA. In Rhodococcus jostii (strain RHA1), this protein is Peptide chain release factor 2.